The primary structure comprises 281 residues: Predicted GPI-anchored protein 39 (281 aa).

Residues 1–18 (MKATTFTLLLSIATAINA) form the signal peptide. 2 disordered regions span residues 52–94 (HHHG…SASV) and 106–227 (VSVS…SSSE). 4 stretches are compositionally biased toward low complexity: residues 69–94 (SSSS…SASV), 106–158 (VSVS…STTD), 167–203 (ATDS…IEET), and 210–227 (SVPS…SSSE). Asparagine 150 carries N-linked (GlcNAc...) asparagine glycosylation. N-linked (GlcNAc...) asparagine glycosylation is found at asparagine 239, asparagine 246, asparagine 249, and asparagine 252. Residue serine 256 is the site of GPI-anchor amidated serine attachment. A propeptide spans 257–281 (ANFAIQYGTDYGVAVVAAIVGALLI) (removed in mature form).

It is found in the cell membrane. The protein is Predicted GPI-anchored protein 39 (PGA39) of Candida albicans (strain SC5314 / ATCC MYA-2876) (Yeast).